The primary structure comprises 362 residues: Olfactory receptor 5AU1 (362 aa).

Residues 1–79 (MTEFHLQSQM…TDPQLQRLLF (79 aa)) are Extracellular-facing. Asparagine 56 carries an N-linked (GlcNAc...) asparagine glycan. A helical transmembrane segment spans residues 80–100 (VVFLGMYTATLLGNLVMFLLI). Over 101 to 116 (HVSATLHTPMYSLLKS) the chain is Cytoplasmic. The helical transmembrane segment at 117 to 139 (LSFLDFCYSSTVVPQTLVNFLAK) threads the bilayer. Topologically, residues 140–150 (RKVISYFGCMT) are extracellular. Cysteine 148 and cysteine 230 are joined by a disulfide. The chain crosses the membrane as a helical span at residues 151–171 (QMFFYAGFATSECYLIAAMAY). Topologically, residues 172–194 (DRYAAICNPLLYSTIMSPEVCAS) are cytoplasmic. Residues 195–215 (LIVGSYSAGFLNSLIHTGCIF) form a helical membrane-spanning segment. At 216 to 247 (SLKFCGAHVVTHFFCDGPPILSLSCVDTSLCE) the chain is on the extracellular side. A helical membrane pass occupies residues 248 to 268 (ILLFIFAGFNLLSCTLTILIS). The Cytoplasmic segment spans residues 269–290 (YFLILNTILKMSSAQGRFKAFS). Residues 291 to 311 (TCASHLTAICLFFGTTLFMYL) form a helical membrane-spanning segment. Residues 312-322 (RPRSSYSLTQD) are Extracellular-facing. A helical transmembrane segment spans residues 323 to 343 (RTVAVIYTVVIPVLNPLMYSL). Residues 344-362 (RNKDVKKALIKVWGRKTME) lie on the Cytoplasmic side of the membrane.

Belongs to the G-protein coupled receptor 1 family.

The protein resides in the cell membrane. In terms of biological role, odorant receptor. This chain is Olfactory receptor 5AU1 (OR5AU1), found in Homo sapiens (Human).